We begin with the raw amino-acid sequence, 256 residues long: Protein FixA (256 aa).

It belongs to the ETF beta-subunit/FixA family. Heterodimer of FixA and FixB.

Its pathway is amine and polyamine metabolism; carnitine metabolism. Its function is as follows. Required for anaerobic carnitine reduction. May bring reductant to CaiA. This Salmonella paratyphi B (strain ATCC BAA-1250 / SPB7) protein is Protein FixA.